The primary structure comprises 260 residues: Chlorocatechol 1,2-dioxygenase (260 aa).

Residues Y130, Y164, H188, and H190 each contribute to the Fe cation site.

It belongs to the intradiol ring-cleavage dioxygenase family. The cofactor is Fe(3+).

It carries out the reaction 3-chlorocatechol + O2 = (2E,4Z)-2-chloromuconate + 2 H(+). The catalysed reaction is 3,5-dichlorocatechol + O2 = (2E,4E)-2,4-dichloromuconate + 2 H(+). The protein operates within aromatic compound metabolism; 3-chlorocatechol degradation. Preferentially converts 3-chlorocatechol and 3,5-dichlorocatechol as opposed to other chlorinated catechols. Retains diminished activity toward non-chlorinated substrates. The polypeptide is Chlorocatechol 1,2-dioxygenase (clcA) (Pseudomonas putida (Arthrobacter siderocapsulatus)).